We begin with the raw amino-acid sequence, 875 residues long: Valine--tRNA ligase (875 aa).

Residues 43–53 carry the 'HIGH' region motif; sequence PNVTGVLHMGH. Positions 534 to 538 match the 'KMSKS' region motif; sequence KMSKS. Lys-537 serves as a coordination point for ATP. Positions 805–875 form a coiled coil; sequence GNLINTEEEL…LKESIAALKK (71 aa).

It belongs to the class-I aminoacyl-tRNA synthetase family. ValS type 1 subfamily. In terms of assembly, monomer.

It is found in the cytoplasm. It catalyses the reaction tRNA(Val) + L-valine + ATP = L-valyl-tRNA(Val) + AMP + diphosphate. Functionally, catalyzes the attachment of valine to tRNA(Val). As ValRS can inadvertently accommodate and process structurally similar amino acids such as threonine, to avoid such errors, it has a 'posttransfer' editing activity that hydrolyzes mischarged Thr-tRNA(Val) in a tRNA-dependent manner. The chain is Valine--tRNA ligase from Phocaeicola vulgatus (strain ATCC 8482 / DSM 1447 / JCM 5826 / CCUG 4940 / NBRC 14291 / NCTC 11154) (Bacteroides vulgatus).